The primary structure comprises 264 residues: Catechol O-methyltransferase B (264 aa).

Positions 1-29 are cleaved as a signal peptide; that stretch reads MLGVLLCWCLGASVLLYVLYSWLIPAAVQ. N31 carries N-linked (GlcNAc...) asparagine glycosylation. S-adenosyl-L-methionine-binding residues include V92, S122, E140, and D191. Position 191 (D191) interacts with Mg(2+). Substrate is bound at residue K194. Mg(2+)-binding residues include D219 and N220. Substrate contacts are provided by N220 and E249.

It belongs to the class I-like SAM-binding methyltransferase superfamily. Cation-dependent O-methyltransferase family. It depends on Mg(2+) as a cofactor. Strongly expressed in eye, diencephalon, spinal cord, hindbrain, liver, kidney and telencephalon. Also detected at very low levels in muscle, spleen, anterior gut and heart. In eye, expressed strongly in retina. In brain, expressed in the central part of the telencephalon, the periventricular gray zone of the optic tectum, the periglomerular nucleus, the olfactory bulb, and the region adjacent to the diencephalic ventricle in the hypothalamus. Expressed in gill, with strongest expression in gill filaments nearest the gill arch, and in esophageal epithelium.

It is found in the secreted. The catalysed reaction is a catechol + S-adenosyl-L-methionine = a guaiacol + S-adenosyl-L-homocysteine + H(+). In terms of biological role, catalyzes the O-methylation, and thereby the inactivation, of catecholamine neurotransmitters and catechol hormones. This chain is Catechol O-methyltransferase B, found in Danio rerio (Zebrafish).